The sequence spans 328 residues: Phosphate acyltransferase (328 aa).

Belongs to the PlsX family. Homodimer. Probably interacts with PlsY.

The protein resides in the cytoplasm. It catalyses the reaction a fatty acyl-[ACP] + phosphate = an acyl phosphate + holo-[ACP]. It functions in the pathway lipid metabolism; phospholipid metabolism. Catalyzes the reversible formation of acyl-phosphate (acyl-PO(4)) from acyl-[acyl-carrier-protein] (acyl-ACP). This enzyme utilizes acyl-ACP as fatty acyl donor, but not acyl-CoA. The polypeptide is Phosphate acyltransferase (Staphylococcus aureus (strain bovine RF122 / ET3-1)).